The sequence spans 147 residues: Hemoglobin subunit beta-M (147 aa).

An N-acetylvaline modification is found at Val-2. One can recognise a Globin domain in the interval 3–147; that stretch reads HLTSEEKNCI…VAHALAHKYH (145 aa). Phosphothreonine is present on Thr-13. Ser-45 is modified (phosphoserine). Position 60 is an N6-acetyllysine (Lys-60). His-64 lines the heme b pocket. Lys-83 bears the N6-acetyllysine mark. His-93 provides a ligand contact to heme b. Cys-94 carries the S-nitrosocysteine modification. Residue Lys-145 is modified to N6-acetyllysine.

It belongs to the globin family. In terms of assembly, heterotetramer of two alpha chains and two beta chains. Red blood cells.

Its function is as follows. Involved in oxygen transport from the lung to the various peripheral tissues. This Didelphis virginiana (North American opossum) protein is Hemoglobin subunit beta-M (HBB).